Consider the following 293-residue polypeptide: Protease HtpX (293 aa).

2 helical membrane passes run 4–24 and 32–52; these read IALFLLTNLAVMVVFGLVLSL and VTGLLIMALLFGFGGSIVSLL. Residue His-139 participates in Zn(2+) binding. Glu-140 is a catalytic residue. Position 143 (His-143) interacts with Zn(2+). A run of 2 helical transmembrane segments spans residues 158 to 178 and 193 to 213; these read VVNTFVIFISRIIAQVAAGFL and LIYFAVATVLELVFGILASII. Glu-222 provides a ligand contact to Zn(2+).

This sequence belongs to the peptidase M48B family. Zn(2+) serves as cofactor.

It localises to the cell inner membrane. The chain is Protease HtpX from Cronobacter sakazakii (strain ATCC BAA-894) (Enterobacter sakazakii).